Consider the following 137-residue polypeptide: BolA-like protein 1 (137 aa).

Serine 81 is subject to Phosphoserine. Residues 114-137 are disordered; sequence WRENSQLDTSPPCLGGNKKTLGTP.

The protein belongs to the BolA/IbaG family. Interacts with GLRX5. As to expression, widely expressed.

Its subcellular location is the mitochondrion. Its function is as follows. Acts as a mitochondrial iron-sulfur (Fe-S) cluster assembly factor that facilitates (Fe-S) cluster insertion into a subset of mitochondrial proteins. Probably acts together with the monothiol glutaredoxin GLRX5. May protect cells against oxidative stress. This chain is BolA-like protein 1, found in Homo sapiens (Human).